The following is a 318-amino-acid chain: 1-phosphofructokinase (318 aa).

Residues 228-233 (SMGTEG) and 259-260 (GD) each bind ATP. Residue Asp-260 is the Proton acceptor of the active site.

Belongs to the carbohydrate kinase PfkB family.

It carries out the reaction beta-D-fructose 1-phosphate + ATP = beta-D-fructose 1,6-bisphosphate + ADP + H(+). Its function is as follows. Catalyzes the ATP-dependent phosphorylation of fructose-l-phosphate to fructose-l,6-bisphosphate. The chain is 1-phosphofructokinase from Xanthomonas campestris pv. campestris (strain ATCC 33913 / DSM 3586 / NCPPB 528 / LMG 568 / P 25).